The primary structure comprises 114 residues: Large ribosomal subunit protein uL22 (114 aa).

It belongs to the universal ribosomal protein uL22 family. In terms of assembly, part of the 50S ribosomal subunit.

This protein binds specifically to 23S rRNA; its binding is stimulated by other ribosomal proteins, e.g. L4, L17, and L20. It is important during the early stages of 50S assembly. It makes multiple contacts with different domains of the 23S rRNA in the assembled 50S subunit and ribosome. Its function is as follows. The globular domain of the protein is located near the polypeptide exit tunnel on the outside of the subunit, while an extended beta-hairpin is found that lines the wall of the exit tunnel in the center of the 70S ribosome. In Streptococcus pneumoniae (strain Taiwan19F-14), this protein is Large ribosomal subunit protein uL22.